Consider the following 256-residue polypeptide: Homeobox protein Hox-D13a (256 aa).

Positions 191–250 (GRKKRVPYTKFQLKELEREYNTTKFITKENRRRIASSTNLSERQVTIWFQNRRVKDKKRP) form a DNA-binding region, homeobox.

Belongs to the Abd-B homeobox family.

It localises to the nucleus. Functionally, sequence-specific transcription factor which is part of a developmental regulatory system that provides cells with specific positional identities on the anterior-posterior axis. This chain is Homeobox protein Hox-D13a (hoxd13a), found in Danio rerio (Zebrafish).